Reading from the N-terminus, the 204-residue chain is LexA repressor (204 aa).

Residues 27–47 constitute a DNA-binding region (H-T-H motif); the sequence is VREIGEAVGLASSSTVHGHLA. Catalysis depends on for autocatalytic cleavage activity residues S126 and K164.

This sequence belongs to the peptidase S24 family. As to quaternary structure, homodimer.

The enzyme catalyses Hydrolysis of Ala-|-Gly bond in repressor LexA.. Represses a number of genes involved in the response to DNA damage (SOS response), including recA and lexA. In the presence of single-stranded DNA, RecA interacts with LexA causing an autocatalytic cleavage which disrupts the DNA-binding part of LexA, leading to derepression of the SOS regulon and eventually DNA repair. This Listeria innocua serovar 6a (strain ATCC BAA-680 / CLIP 11262) protein is LexA repressor.